Reading from the N-terminus, the 190-residue chain is dCTP deaminase, dUMP-forming (190 aa).

Residues 101-106 (KSSLGR), aspartate 119, 127-129 (TLE), glutamine 148, tyrosine 162, and glutamine 174 contribute to the dCTP site. Residue glutamate 129 is the Proton donor/acceptor of the active site. The interval 161 to 190 (PYGSSGVGSKYQGQRGPTPSRSYQNFIRST) is disordered. The span at 171 to 190 (YQGQRGPTPSRSYQNFIRST) shows a compositional bias: polar residues.

This sequence belongs to the dCTP deaminase family. Homotrimer.

It carries out the reaction dCTP + 2 H2O = dUMP + NH4(+) + diphosphate. It functions in the pathway pyrimidine metabolism; dUMP biosynthesis; dUMP from dCTP: step 1/1. In terms of biological role, bifunctional enzyme that catalyzes both the deamination of dCTP to dUTP and the hydrolysis of dUTP to dUMP without releasing the toxic dUTP intermediate. The chain is dCTP deaminase, dUMP-forming from Mycobacterium ulcerans (strain Agy99).